Consider the following 73-residue polypeptide: Large ribosomal subunit protein bL31 (73 aa).

4 residues coordinate Zn(2+): C16, C18, C37, and C40.

The protein belongs to the bacterial ribosomal protein bL31 family. Type A subfamily. In terms of assembly, part of the 50S ribosomal subunit. Requires Zn(2+) as cofactor.

Functionally, binds the 23S rRNA. This is Large ribosomal subunit protein bL31 from Pseudomonas fluorescens (strain ATCC BAA-477 / NRRL B-23932 / Pf-5).